The sequence spans 278 residues: Urease accessory protein UreD (278 aa).

This sequence belongs to the UreD family. UreD, UreF and UreG form a complex that acts as a GTP-hydrolysis-dependent molecular chaperone, activating the urease apoprotein by helping to assemble the nickel containing metallocenter of UreC. The UreE protein probably delivers the nickel.

The protein resides in the cytoplasm. Functionally, required for maturation of urease via the functional incorporation of the urease nickel metallocenter. This Staphylococcus aureus (strain JH1) protein is Urease accessory protein UreD.